The chain runs to 546 residues: Protein HydE (546 aa).

This is Protein HydE (hydE) from Wolinella succinogenes (strain ATCC 29543 / DSM 1740 / CCUG 13145 / JCM 31913 / LMG 7466 / NCTC 11488 / FDC 602W) (Vibrio succinogenes).